A 137-amino-acid polypeptide reads, in one-letter code: uncharacterized protein (137 aa).

The 76-residue stretch at 30–105 (SLLCVFTALR…IRFIQIPDKI (76 aa)) folds into the Sm domain.

This is an uncharacterized protein from Dictyostelium discoideum (Social amoeba).